The sequence spans 177 residues: Ribosome maturation factor RimM (177 aa).

In terms of domain architecture, PRC barrel spans 104–177 (GVDGIWADLI…IIKVKLMEGM (74 aa)).

Belongs to the RimM family. As to quaternary structure, binds ribosomal protein uS19.

The protein localises to the cytoplasm. Functionally, an accessory protein needed during the final step in the assembly of 30S ribosomal subunit, possibly for assembly of the head region. Essential for efficient processing of 16S rRNA. May be needed both before and after RbfA during the maturation of 16S rRNA. It has affinity for free ribosomal 30S subunits but not for 70S ribosomes. The polypeptide is Ribosome maturation factor RimM (Magnetococcus marinus (strain ATCC BAA-1437 / JCM 17883 / MC-1)).